The sequence spans 218 residues: Guanylate kinase (218 aa).

The Guanylate kinase-like domain maps to 14 to 193 (GLMLVLSSPS…AFAEVRGIVV (180 aa)). 21 to 28 (SPSGAGKS) is an ATP binding site.

This sequence belongs to the guanylate kinase family.

It is found in the cytoplasm. The catalysed reaction is GMP + ATP = GDP + ADP. Essential for recycling GMP and indirectly, cGMP. In Mesorhizobium japonicum (strain LMG 29417 / CECT 9101 / MAFF 303099) (Mesorhizobium loti (strain MAFF 303099)), this protein is Guanylate kinase (gmk).